The following is a 339-amino-acid chain: Protein H339R (339 aa).

Belongs to the asfivirus H339R family. Interacts with NACA (alpha chain of nascent polypeptide-associated complex).

It is found in the host cytoplasm. It localises to the host nucleus. The protein resides in the virion. The chain is Protein H339R from African swine fever virus (strain Badajoz 1971 Vero-adapted) (Ba71V).